Here is a 285-residue protein sequence, read N- to C-terminus: Methyl-CpG-binding domain protein 3 (285 aa).

Residues 1–69 form the MBD domain; that stretch reads MERKRWECPA…STFDFRTGKM (69 aa). Position 56 is a phosphoserine (serine 56). A Glycyl lysine isopeptide (Lys-Gly) (interchain with G-Cter in SUMO2) cross-link involves residue lysine 73. Serine 85 carries the post-translational modification Phosphoserine. Glycyl lysine isopeptide (Lys-Gly) (interchain with G-Cter in SUMO2) cross-links involve residues lysine 90 and lysine 92. Position 144 is a phosphoserine (serine 144). The stretch at 221–279 forms a coiled coil; that stretch reads TDDDIRKQEELVQQVRKRLEEALMADMLAHVEELARDGEAPLDKACAEEEEEEEEEEEE. The segment covering 255–267 has biased composition (basic and acidic residues); sequence ARDGEAPLDKACA. The disordered stretch occupies residues 255-285; it reads ARDGEAPLDKACAEEEEEEEEEEEEPEPERV. The segment covering 268 to 285 has biased composition (acidic residues); the sequence is EEEEEEEEEEEEPEPERV.

As to quaternary structure, heterodimer (via N-terminus) with MBD2. Component of the MeCP1 histone deacetylase complex. Component of the nucleosome remodeling and deacetylase (NuRD) repressor complex, composed of core proteins MTA1, MTA2, MTA3, RBBP4, RBBP7, HDAC1, HDAC2, MBD2, MBD3, and peripherally associated proteins CDK2AP1, CDK2AP2, GATAD2A, GATAD2B, CHD3, CHD4 and CHD5. The exact stoichiometry of the NuRD complex is unknown, and some subunits such as MBD2 and MBD3, GATAD2A and GATAD2B, and CHD3, CHD4 and CHD5 define mutually exclusive NuRD complexes. Interacts with MBD3L2 (via N-terminus); the interaction is direct. Interacts with BCL6. Interacts with CDK2AP1. Interacts with HDAC1. Interacts with MTA2. Interacts with DNMT1. Interacts with GATAD2A. Interacts with GATAD2B. Does not interact with PWWP2A. Does not interact with PWWP2B. As to expression, highly expressed in brain, heart, kidney, liver, lung, skeletal muscle, spleen and testis. Detected at lower levels in embryonic stem cells.

The protein localises to the nucleus. The protein resides in the chromosome. In terms of biological role, acts as a component of the histone deacetylase NuRD complex which participates in the remodeling of chromatin. Acts as transcriptional repressor and plays a role in gene silencing. Does not bind methylated DNA by itself. Binds to a lesser degree DNA containing unmethylated CpG dinucleotides. Recruits histone deacetylases and DNA methyltransferases. The chain is Methyl-CpG-binding domain protein 3 (Mbd3) from Mus musculus (Mouse).